Reading from the N-terminus, the 54-residue chain is Large ribosomal subunit protein bL33A (54 aa).

This sequence belongs to the bacterial ribosomal protein bL33 family.

In Streptomyces griseus subsp. griseus (strain JCM 4626 / CBS 651.72 / NBRC 13350 / KCC S-0626 / ISP 5235), this protein is Large ribosomal subunit protein bL33A.